Consider the following 208-residue polypeptide: Uracil phosphoribosyltransferase (208 aa).

5-phospho-alpha-D-ribose 1-diphosphate contacts are provided by residues R78, R103, and 130–138 (DPMLATGGS). Uracil contacts are provided by residues I193 and 198–200 (GDA). D199 provides a ligand contact to 5-phospho-alpha-D-ribose 1-diphosphate.

The protein belongs to the UPRTase family. Mg(2+) is required as a cofactor.

The catalysed reaction is UMP + diphosphate = 5-phospho-alpha-D-ribose 1-diphosphate + uracil. It participates in pyrimidine metabolism; UMP biosynthesis via salvage pathway; UMP from uracil: step 1/1. Its activity is regulated as follows. Allosterically activated by GTP. Functionally, catalyzes the conversion of uracil and 5-phospho-alpha-D-ribose 1-diphosphate (PRPP) to UMP and diphosphate. The sequence is that of Uracil phosphoribosyltransferase from Klebsiella pneumoniae (strain 342).